The chain runs to 684 residues: Histone-lysine N-methyltransferase SETMAR (684 aa).

The segment at 1-345 (MFAEAAKTTR…RLTLETMKMM (345 aa)) is histone-lysine N-methyltransferase. The region spanning 73–136 (PGCICVKTPC…HCRNRVVQKG (64 aa)) is the Pre-SET domain. The Zn(2+) site is built by cysteine 75, cysteine 77, cysteine 82, cysteine 87, cysteine 89, cysteine 118, cysteine 122, cysteine 124, and cysteine 128. An SET domain is found at 139–263 (FHFQVFKTHK…PEEELSYDYS (125 aa)). S-adenosyl-L-methionine contacts are provided by residues 149-151 (KGW), tyrosine 192, arginine 220, and 223-224 (NH). Zn(2+)-binding residues include cysteine 226, cysteine 287, cysteine 289, and cysteine 294. Positions 283-299 (LRKPCYCGAKSCTAFLP) constitute a Post-SET domain. Positions 346-684 (LDKKQIRAIF…CVDCNGSYFD (339 aa)) are mariner transposase Hsmar1. DNA-binding regions (H-T-H motif) lie at residues 364–395 (KAAETTRNINNAFGPGTANERTVQWWFKKFCK) and 428–448 (TTREVAEELNVNHSTVVRHLK). Residue aspartate 496 participates in Mg(2+) binding. Position 498 is an N6-methyllysine (lysine 498). Residue serine 508 is modified to Phosphoserine; by CHEK1. A Mg(2+)-binding site is contributed by aspartate 588.

In the N-terminal section; belongs to the class V-like SAM-binding methyltransferase superfamily. This sequence in the C-terminal section; belongs to the mariner transposase family. In terms of assembly, homodimer. Interacts with PRPF19; required for SETMAR recruitment to damaged DNA sites. Interacts with PCNA. Interacts with TOP2A; stimulates TOP2A topoisomerase activity. May interact with RAD9A and/or RAD9B. Mg(2+) serves as cofactor. In terms of processing, methylated. Methylation regulates activity in DNA decatenation. Post-translationally, phosphorylated at Ser-508 by CHEK1 and dephosphorylated by protein phosphatase 2A/PP2A. Phosphorylation at Ser-508 is enhanced by DNA damage and promotes recruitment to damaged DNA. It stimulates DNA repair and impairs replication fork restart. Widely expressed, with highest expression in placenta and ovary and lowest expression in skeletal muscle.

It is found in the nucleus. It localises to the chromosome. It catalyses the reaction L-lysyl(36)-[histone H3] + 2 S-adenosyl-L-methionine = N(6),N(6)-dimethyl-L-lysyl(36)-[histone H3] + 2 S-adenosyl-L-homocysteine + 2 H(+). Functionally, protein derived from the fusion of a methylase with the transposase of an Hsmar1 transposon that plays a role in DNA double-strand break repair, stalled replication fork restart and DNA integration. DNA-binding protein, it is indirectly recruited to sites of DNA damage through protein-protein interactions. Also has kept a sequence-specific DNA-binding activity recognizing the 19-mer core of the 5'-terminal inverted repeats (TIRs) of the Hsmar1 element and displays a DNA nicking and end joining activity. In parallel, has a histone methyltransferase activity and methylates 'Lys-4' and 'Lys-36' of histone H3. Specifically mediates dimethylation of H3 'Lys-36' at sites of DNA double-strand break and may recruit proteins required for efficient DSB repair through non-homologous end-joining. Also regulates replication fork processing, promoting replication fork restart and regulating DNA decatenation through stimulation of the topoisomerase activity of TOP2A. In Homo sapiens (Human), this protein is Histone-lysine N-methyltransferase SETMAR.